A 952-amino-acid chain; its full sequence is Protein translocase subunit SecA (952 aa).

Residues Gln-135, 153–157 (GEGKT), and Asp-575 each bind ATP. Residues 916-930 (VSAKAATQPAAPAAK) show a composition bias toward low complexity. Positions 916-952 (VSAKAATQPAAPAAKEVGRNDPCPCGSGKKYKKCCGK) are disordered. Cys-938, Cys-940, Cys-949, and Cys-950 together coordinate Zn(2+).

The protein belongs to the SecA family. In terms of assembly, monomer and homodimer. Part of the essential Sec protein translocation apparatus which comprises SecA, SecYEG and auxiliary proteins SecDF. Other proteins may also be involved. It depends on Zn(2+) as a cofactor.

It localises to the cell membrane. It is found in the cytoplasm. It carries out the reaction ATP + H2O + cellular proteinSide 1 = ADP + phosphate + cellular proteinSide 2.. Its function is as follows. Part of the Sec protein translocase complex. Interacts with the SecYEG preprotein conducting channel. Has a central role in coupling the hydrolysis of ATP to the transfer of proteins into and across the cell membrane, serving as an ATP-driven molecular motor driving the stepwise translocation of polypeptide chains across the membrane. This is Protein translocase subunit SecA from Dehalococcoides mccartyi (strain ATCC BAA-2266 / KCTC 15142 / 195) (Dehalococcoides ethenogenes (strain 195)).